The following is a 196-amino-acid chain: Nodulation protein A (196 aa).

The protein belongs to the NodA family.

The protein resides in the cytoplasm. In terms of biological role, N-acyltransferase required for nodulation. Acts in the production of a small, heat-stable compound (Nod) that stimulates mitosis in various plant protoplasts. In Sinorhizobium terangae, this protein is Nodulation protein A.